Here is a 138-residue protein sequence, read N- to C-terminus: ATP synthase epsilon chain (138 aa).

Belongs to the ATPase epsilon chain family. As to quaternary structure, F-type ATPases have 2 components, CF(1) - the catalytic core - and CF(0) - the membrane proton channel. CF(1) has five subunits: alpha(3), beta(3), gamma(1), delta(1), epsilon(1). CF(0) has three main subunits: a, b and c.

It is found in the cell inner membrane. Functionally, produces ATP from ADP in the presence of a proton gradient across the membrane. This Acidovorax ebreus (strain TPSY) (Diaphorobacter sp. (strain TPSY)) protein is ATP synthase epsilon chain.